Here is an 89-residue protein sequence, read N- to C-terminus: MFAIMTVTGQDHTGIIAAVSTALAELDVNIHNVSQTIMDKWFTMILHVGFDDAALTIADIQERMTSVEKEQGLVIRIQSEALFSAVNDI.

One can recognise an ACT domain in the interval 4–78 (IMTVTGQDHT…KEQGLVIRIQ (75 aa)).

It belongs to the UPF0237 family.

In Corynebacterium efficiens (strain DSM 44549 / YS-314 / AJ 12310 / JCM 11189 / NBRC 100395), this protein is UPF0237 protein CE1668.